We begin with the raw amino-acid sequence, 75 residues long: Small ribosomal subunit protein bS18 (75 aa).

The protein belongs to the bacterial ribosomal protein bS18 family. Part of the 30S ribosomal subunit. Forms a tight heterodimer with protein bS6.

Functionally, binds as a heterodimer with protein bS6 to the central domain of the 16S rRNA, where it helps stabilize the platform of the 30S subunit. This chain is Small ribosomal subunit protein bS18, found in Sodalis glossinidius (strain morsitans).